A 67-amino-acid chain; its full sequence is Large ribosomal subunit protein bL31 (67 aa).

The Zn(2+) site is built by Cys16, Cys18, Cys37, and Cys40.

The protein belongs to the bacterial ribosomal protein bL31 family. Type A subfamily. Part of the 50S ribosomal subunit. Zn(2+) is required as a cofactor.

In terms of biological role, binds the 23S rRNA. This Methylococcus capsulatus (strain ATCC 33009 / NCIMB 11132 / Bath) protein is Large ribosomal subunit protein bL31.